Reading from the N-terminus, the 202-residue chain is Crustacean calcium-binding protein 23 (202 aa).

Position 1 is an N-acetylserine (serine 1). EF-hand domains are found at residues 33-68, 69-104, 105-140, and 148-185; these read SGLL…FGLD, LSDG…EMTE, PRKK…KTHP, and TEDE…LSKA. Ca(2+)-binding residues include aspartate 84, glutamate 93, aspartate 118, aspartate 122, and aspartate 129.

As to quaternary structure, monomer or disulfide-linked dimers. Striated muscle and brain.

Functionally, possibly acts as a regulatory protein and not as a calcium buffer or transport protein. In Faxonius limosus (Spinycheek crayfish), this protein is Crustacean calcium-binding protein 23.